Reading from the N-terminus, the 186-residue chain is Acetyltransferase PA2578 (186 aa).

In terms of domain architecture, N-acetyltransferase spans L12–Q176. CoA-binding positions include Q37, I97–L99, G105, N137, and H142–Y144.

As to quaternary structure, homodimer.

Catalyzes the transfer of an acetyl group from acetyl coenzyme A (AcCoA) to an acceptor substrate and releases both CoA and the acetylated product. It prefers the antibiotic chloramphenicol. This is Acetyltransferase PA2578 from Pseudomonas aeruginosa (strain ATCC 15692 / DSM 22644 / CIP 104116 / JCM 14847 / LMG 12228 / 1C / PRS 101 / PAO1).